Consider the following 595-residue polypeptide: Cardiolipin synthase (CMP-forming) / mitochondrial hydrolase fusion protein (595 aa).

The transit peptide at 1–24 (MLHTINYRSWHLAARQLGRSTFRK) directs the protein to the mitochondrion. 2 helical membrane passes run 538–560 (ALQL…ASFA) and 564–586 (LFYI…RNTF).

This sequence in the N-terminal section; belongs to the HAD-like hydrolase superfamily. It in the C-terminal section; belongs to the CDP-alcohol phosphatidyltransferase class-I family. The cofactor is Mg(2+). Post-translationally, proteolytically cleaved, presumably during its import into the mitochondrion by mitochondrial processing peptidase.

Its subcellular location is the mitochondrion. It is found in the mitochondrion inner membrane. The catalysed reaction is a CDP-1,2-diacyl-sn-glycerol + a 1,2-diacyl-sn-glycero-3-phospho-(1'-sn-glycerol) = a cardiolipin + CMP + H(+). In terms of biological role, catalyzes the synthesis of cardiolipin (CL) (diphosphatidylglycerol) by specifically transferring a phosphatidyl group from CDP-diacylglycerol to phosphatidylglycerol (PG). CL is a key phospholipid in mitochondrial membranes and plays important roles in maintaining the functional integrity and dynamics of mitochondria under both optimal and stress conditions. Functionally, activity is dispensable for viability. This Schizosaccharomyces pombe (strain 972 / ATCC 24843) (Fission yeast) protein is Cardiolipin synthase (CMP-forming) / mitochondrial hydrolase fusion protein.